Consider the following 801-residue polypeptide: Transducin beta-like protein 3 (801 aa).

Alanine 2 carries the post-translational modification N-acetylalanine. WD repeat units lie at residues 64–105 (EDQE…RLWK), 107–146 (IHTAPVASMAFDATSTLLATGGCDGAVRVWDIVQHYGTHH), 149–190 (GSPG…CLAV), 193–232 (AHYSAVTSLSFSEGGHTMLSSGRDKICIVWDLQSYQTTRT), 245–284 (LPEQPAPALGVKSSGLHFLTAGDQGILRVWEAASGQCVYT), 290–329 (GLRQELTHCTLARAADLLLTVTADHNLLLYEAHSLQLQKQ), 332–372 (GYSE…CQIL), 374–413 (GHTDIVLALDVFRKGWLFASCAKDQSIRIWKMNKAGQVAC), 419–459 (GHTH…LAKS), 477–516 (CHDKDINSLAVSPNDKLLATGSQDRTAKLWALPQCQLLGV), 519–560 (GHRR…KTFE), 562–602 (HDAS…RTLD), and 604–642 (HEDKVWGLHCSQLDDHAITGGSDSRIILWKDVTEAEQAE). Position 257 is a phosphoserine (serine 257). Residue lysine 407 forms a Glycyl lysine isopeptide (Lys-Gly) (interchain with G-Cter in SUMO2) linkage.

Part of the small subunit (SSU) processome, composed of more than 70 proteins and the RNA chaperone small nucleolar RNA (snoRNA) U3.

The protein resides in the nucleus. The protein localises to the nucleolus. Its function is as follows. Part of the small subunit (SSU) processome, first precursor of the small eukaryotic ribosomal subunit. During the assembly of the SSU processome in the nucleolus, many ribosome biogenesis factors, an RNA chaperone and ribosomal proteins associate with the nascent pre-rRNA and work in concert to generate RNA folding, modifications, rearrangements and cleavage as well as targeted degradation of pre-ribosomal RNA by the RNA exosome. This chain is Transducin beta-like protein 3 (Tbl3), found in Mus musculus (Mouse).